Reading from the N-terminus, the 124-residue chain is Glycine cleavage system H protein (124 aa).

Residues 22-104 (KAKVGITDFA…YENGYLFIIE (83 aa)) form the Lipoyl-binding domain. An N6-lipoyllysine modification is found at K63.

This sequence belongs to the GcvH family. In terms of assembly, the glycine cleavage system is composed of four proteins: P, T, L and H. It depends on (R)-lipoate as a cofactor.

Functionally, the glycine cleavage system catalyzes the degradation of glycine. The H protein shuttles the methylamine group of glycine from the P protein to the T protein. This chain is Glycine cleavage system H protein, found in Endomicrobium trichonymphae.